The following is a 218-amino-acid chain: Pyridoxine/pyridoxamine 5'-phosphate oxidase (218 aa).

Residues 14-17 (RREY) and lysine 72 each bind substrate. Residues 67–72 (RIVLLK), 82–83 (YT), arginine 88, lysine 89, and glutamine 111 contribute to the FMN site. 3 residues coordinate substrate: tyrosine 129, arginine 133, and serine 137. FMN is bound by residues 146-147 (QS) and tryptophan 191. Substrate is bound at residue 197–199 (RLH). Residue arginine 201 coordinates FMN.

It belongs to the pyridoxamine 5'-phosphate oxidase family. In terms of assembly, homodimer. Requires FMN as cofactor.

It catalyses the reaction pyridoxamine 5'-phosphate + O2 + H2O = pyridoxal 5'-phosphate + H2O2 + NH4(+). The catalysed reaction is pyridoxine 5'-phosphate + O2 = pyridoxal 5'-phosphate + H2O2. Its pathway is cofactor metabolism; pyridoxal 5'-phosphate salvage; pyridoxal 5'-phosphate from pyridoxamine 5'-phosphate: step 1/1. It functions in the pathway cofactor metabolism; pyridoxal 5'-phosphate salvage; pyridoxal 5'-phosphate from pyridoxine 5'-phosphate: step 1/1. In terms of biological role, catalyzes the oxidation of either pyridoxine 5'-phosphate (PNP) or pyridoxamine 5'-phosphate (PMP) into pyridoxal 5'-phosphate (PLP). The protein is Pyridoxine/pyridoxamine 5'-phosphate oxidase of Escherichia coli O139:H28 (strain E24377A / ETEC).